The sequence spans 111 residues: Cytochrome c (111 aa).

Alanine 1 carries the post-translational modification N-acetylalanine. Positions 22, 25, and 26 each coordinate heme c. Lysine 80 is subject to N6,N6,N6-trimethyllysine. Methionine 88 is a heme c binding site. At lysine 94 the chain carries N6,N6,N6-trimethyllysine.

This sequence belongs to the cytochrome c family. In terms of processing, binds 1 heme c group covalently per subunit.

It localises to the mitochondrion intermembrane space. In terms of biological role, electron carrier protein. The oxidized form of the cytochrome c heme group can accept an electron from the heme group of the cytochrome c1 subunit of cytochrome reductase. Cytochrome c then transfers this electron to the cytochrome oxidase complex, the final protein carrier in the mitochondrial electron-transport chain. This is Cytochrome c from Gossypium barbadense (Sea Island cotton).